The chain runs to 120 residues: Putative pterin-4-alpha-carbinolamine dehydratase (120 aa).

Belongs to the pterin-4-alpha-carbinolamine dehydratase family.

It catalyses the reaction (4aS,6R)-4a-hydroxy-L-erythro-5,6,7,8-tetrahydrobiopterin = (6R)-L-erythro-6,7-dihydrobiopterin + H2O. This chain is Putative pterin-4-alpha-carbinolamine dehydratase, found in Bdellovibrio bacteriovorus (strain ATCC 15356 / DSM 50701 / NCIMB 9529 / HD100).